A 419-amino-acid chain; its full sequence is eIF5-mimic protein 2 (419 aa).

At methionine 1 the chain carries N-acetylmethionine. Over residues 1 to 15 (MNNQKQQKPTLSGQR) the composition is skewed to polar residues. The segment at 1 to 26 (MNNQKQQKPTLSGQRFKTRKRDEKER) is disordered. Serine 12 bears the Phosphoserine mark. The region spanning 247-414 (NQQTIGARKE…KNAEEESESE (168 aa)) is the W2 domain. Lysine 368 is covalently cross-linked (Glycyl lysine isopeptide (Lys-Gly) (interchain with G-Cter in SUMO2)). Residues serine 411 and serine 413 each carry the phosphoserine modification.

Belongs to the BZW family.

In terms of biological role, translation initiation regulator which represses repeat-associated non-AUG (RAN) initiated translation probably by acting as a competitive inhibitor of eukaryotic translation initiation factor 5 (EIF5) function. Enhances histone H4 gene transcription but does not seem to bind DNA directly. The sequence is that of eIF5-mimic protein 2 (BZW1) from Homo sapiens (Human).